Consider the following 425-residue polypeptide: Tyrosine--tRNA ligase (425 aa).

Position 37 (Y37) interacts with L-tyrosine. The short motif at 42–51 is the 'HIGH' region element; that stretch reads PTADSLHLGH. The L-tyrosine site is built by Y175 and Q179. A 'KMSKS' region motif is present at residues 235 to 239; sequence KFGKT. K238 lines the ATP pocket. One can recognise an S4 RNA-binding domain in the interval 357–414; the sequence is ADLQQALVSAELVPSRGQARTMISSNAVTINGEKQANPEYIFSASDRLFDRYTLLRRG.

The protein belongs to the class-I aminoacyl-tRNA synthetase family. TyrS type 1 subfamily. As to quaternary structure, homodimer.

It is found in the cytoplasm. It carries out the reaction tRNA(Tyr) + L-tyrosine + ATP = L-tyrosyl-tRNA(Tyr) + AMP + diphosphate + H(+). In terms of biological role, catalyzes the attachment of tyrosine to tRNA(Tyr) in a two-step reaction: tyrosine is first activated by ATP to form Tyr-AMP and then transferred to the acceptor end of tRNA(Tyr). The protein is Tyrosine--tRNA ligase of Pectobacterium atrosepticum (strain SCRI 1043 / ATCC BAA-672) (Erwinia carotovora subsp. atroseptica).